The following is a 476-amino-acid chain: Glycogen synthase (476 aa).

Lysine 15 contacts ADP-alpha-D-glucose.

Belongs to the glycosyltransferase 1 family. Bacterial/plant glycogen synthase subfamily.

It carries out the reaction [(1-&gt;4)-alpha-D-glucosyl](n) + ADP-alpha-D-glucose = [(1-&gt;4)-alpha-D-glucosyl](n+1) + ADP + H(+). It participates in glycan biosynthesis; glycogen biosynthesis. Synthesizes alpha-1,4-glucan chains using ADP-glucose. The protein is Glycogen synthase of Bacillus cereus (strain B4264).